Here is a 59-residue protein sequence, read N- to C-terminus: Conotoxin ViVB (59 aa).

Residues 1–22 (MRCVPVFIILLLLIPSAPSAAV) form the signal peptide. Residues 23 to 46 (QPKTEKDDVPLASFHDSAMRILSR) constitute a propeptide that is removed on maturation. Glutamine 47 is subject to Pyrrolidone carboxylic acid. Valine 58 bears the Valine amide mark.

In terms of processing, contains 2 disulfide bonds that can be either 'C1-C3, C2-C4' or 'C1-C4, C2-C3', since these disulfide connectivities have been observed for conotoxins with cysteine framework V (for examples, see AC P0DQQ7 and AC P81755). As to expression, expressed by the venom duct.

The protein localises to the secreted. The polypeptide is Conotoxin ViVB (Conus virgo (Virgin cone)).